The primary structure comprises 618 residues: Methylmalonyl-CoA mutase small subunit (618 aa).

It belongs to the methylmalonyl-CoA mutase family. As to quaternary structure, heterodimer of an alpha and a beta chain. The cofactor is adenosylcob(III)alamin.

It catalyses the reaction (R)-methylmalonyl-CoA = succinyl-CoA. It participates in metabolic intermediate metabolism; propanoyl-CoA degradation; succinyl-CoA from propanoyl-CoA: step 3/3. In terms of biological role, catalyzes the isomerization of succinyl-CoA to methylmalonyl-CoA during synthesis of propionate from tricarboxylic acid-cycle intermediates. The sequence is that of Methylmalonyl-CoA mutase small subunit (mutA) from Porphyromonas gingivalis (strain ATCC BAA-308 / W83).